The primary structure comprises 392 residues: GPI alpha-1,4-mannosyltransferase I, catalytic subunit (392 aa).

Topologically, residues 1 to 4 are cytoplasmic; it reads MEAR. The chain crosses the membrane as a helical span at residues 5–25; it reads VCVLFGAAALLRLLLLCVGVY. The Lumenal segment spans residues 26 to 65; that stretch reads QDQTLKLKYTDVDYHVFTDAARFITQGESPYRRSTFRYTP. A helical transmembrane segment spans residues 66–86; sequence LLALLLVPNVYLSLLFGKLLF. The Cytoplasmic segment spans residues 87–125; sequence GFCDLLSGLLMFRLLVLRGASHGSACVSCGLWLLNPLPM. Residues 126-148 form a helical membrane-spanning segment; it reads AVSTRGNAESVLAVLVLSTLLCL. Topologically, residues 149 to 156 are lumenal; the sequence is QLRKHTTA. A helical membrane pass occupies residues 157 to 177; sequence ALLFGLSVHMKIYPVTYALPI. Topologically, residues 178–198 are cytoplasmic; it reads ALALTAAPARGRGVLLRFFSP. A helical membrane pass occupies residues 199–219; that stretch reads ALLRFAAVSAAVFLSLGLIFY. The Lumenal portion of the chain corresponds to 220–261; sequence CRYGWEFLQEAYLYHLTRRDLRHNFSPFFYLQYVCAERCWSS. A helical membrane pass occupies residues 262–282; the sequence is GLLPLLLLPQLLLLLLASAAF. Residues 283–302 are Cytoplasmic-facing; that stretch reads SSDLPFCCFLHTAVFVSFNR. A helical membrane pass occupies residues 303-323; the sequence is VCTSQYFLWYLCLLPVVLPRL. Over 324-330 the chain is Lumenal; sequence RLRLGRG. Residues 331–351 form a helical membrane-spanning segment; that stretch reads LLLLLLWLLLQGLWLAPAYLL. Over 352-360 the chain is Cytoplasmic; the sequence is EFQGWNSFS. Residues 361–381 traverse the membrane as a helical segment; sequence WIWAASLLFLLTNTFILAQII. Residues 382 to 392 are Lumenal-facing; sequence QHYRPHDRKAD.

The protein belongs to the PIGM family. In terms of assembly, part of the glycosylphosphatidylinositol-mannosyltransferase I complex that is composed of PIGM and PIGX.

The protein resides in the endoplasmic reticulum membrane. The protein operates within glycolipid biosynthesis; glycosylphosphatidylinositol-anchor biosynthesis. Catalytic subunit of the glycosylphosphatidylinositol-mannosyltransferase I complex which catalyzes the transfer of the first mannose, via an alpha-1,4 bond from a dolichol-phosphate-mannose (Dol-P-Man) to the glucosaminyl acyl phosphatidylinositol (GlcN-(acyl)PI) intermediate to generate alpha-D-Man-(1-&gt;4)-alpha-D-GlcN-(1-&gt;6)-(1-radyl,2-acyl-sn-glycero-3-phospho)-2-acyl-inositol and participates in the sixth step of the glycosylphosphatidylinositol-anchor biosynthesis. This chain is GPI alpha-1,4-mannosyltransferase I, catalytic subunit, found in Danio rerio (Zebrafish).